Reading from the N-terminus, the 566-residue chain is MISASRMEESASSSSLSDAAAPPPGAALQSIRSSCDRCRFHKLKCNVPAAGHGGPVPCERCTRAKVPCVFGRRRRANRPSEDKKRPAAPTRRATMPSPSPTPASTSAAHGGGDSATTGSADPPPPPPSTMDAALQRTPASHSDTGPAATYDGRSWETLMTGGLGDSPDILPGQHNSAGNGWEWFHQGFGLDDTSMFDADTLDPAIIWSPPTPQHIPTAALALATTELDMTTAPPATSGGTANMMRSSNTNTNSNSNSSSCWAPVQQLLPLIADMQQRLKMLEQGPWQGGDFPQSLDDYPVGAVLHLSREFGSIAGQVLSRAIAAGMVTGGGVPPVVRNHATDGGREFIVTNNPQKHLGSESSSSSSSSISNSSSNNEAGGDDGGVDTATALLVLGGYMWLMRIYGAALGHFQVHLSGLSGASESDGCGRGASRSGPNASPALRLGELPSTGTAPDLGRIHTALGMLQGALAEVEGQLGRGGAVARNLVVALLTRQEAVSRGVGGGGGGGGGGGGGGGGGVGGGGGGGGGPGGSSEHSGGSSDVDDCEGLGGKVQSVKELLREKMGF.

Residues 1-30 (MISASRMEESASSSSLSDAAAPPPGAALQS) show a composition bias toward low complexity. Residues 1–31 (MISASRMEESASSSSLSDAAAPPPGAALQSI) form a disordered region. A DNA-binding region (zn(2)-C6 fungal-type) is located at residues 35–68 (CDRCRFHKLKCNVPAAGHGGPVPCERCTRAKVPC). Disordered stretches follow at residues 72–174 (RRRR…PGQH), 346–382 (EFIV…GGDD), 422–453 (SESD…TGTA), and 500–551 (RGVG…GLGG). Low complexity-rich tracts occupy residues 89 to 108 (PTRR…TSAA) and 359 to 378 (SESS…NNEA). Over residues 501 to 532 (GVGGGGGGGGGGGGGGGGGVGGGGGGGGGPGG) the composition is skewed to gly residues.

Its subcellular location is the nucleus. In terms of biological role, transcription factor that regulates the expression of the gene cluster that mediates the biosynthesis of the tetramic acids Sch210971 and Sch210972, potential anti-HIV fungal natural product that contain a decalin core. The protein is Transcription factor tasR of Hapsidospora irregularis.